A 1400-amino-acid chain; its full sequence is DNA-directed RNA polymerase subunit beta' (1400 aa).

4 residues coordinate Zn(2+): Cys-71, Cys-73, Cys-86, and Cys-89. Residues Asp-462, Asp-464, and Asp-466 each contribute to the Mg(2+) site. Zn(2+)-binding residues include Cys-811, Cys-885, Cys-892, and Cys-895.

The protein belongs to the RNA polymerase beta' chain family. The RNAP catalytic core consists of 2 alpha, 1 beta, 1 beta' and 1 omega subunit. When a sigma factor is associated with the core the holoenzyme is formed, which can initiate transcription. Mg(2+) is required as a cofactor. Zn(2+) serves as cofactor.

The enzyme catalyses RNA(n) + a ribonucleoside 5'-triphosphate = RNA(n+1) + diphosphate. In terms of biological role, DNA-dependent RNA polymerase catalyzes the transcription of DNA into RNA using the four ribonucleoside triphosphates as substrates. The sequence is that of DNA-directed RNA polymerase subunit beta' from Brucella canis (strain ATCC 23365 / NCTC 10854 / RM-666).